The primary structure comprises 154 residues: NADPH-dependent 7-cyano-7-deazaguanine reductase (154 aa).

The disordered stretch occupies residues 1–24; sequence MPKTDVSGLSQLGTKVDLPQSPEE. The Thioimide intermediate role is filled by C52. The Proton donor role is filled by D59. Substrate contacts are provided by residues 74–76 and 93–94; these read VES and HE.

Belongs to the GTP cyclohydrolase I family. QueF type 1 subfamily.

The protein resides in the cytoplasm. The catalysed reaction is 7-aminomethyl-7-carbaguanine + 2 NADP(+) = 7-cyano-7-deazaguanine + 2 NADPH + 3 H(+). It functions in the pathway tRNA modification; tRNA-queuosine biosynthesis. Its function is as follows. Catalyzes the NADPH-dependent reduction of 7-cyano-7-deazaguanine (preQ0) to 7-aminomethyl-7-deazaguanine (preQ1). The protein is NADPH-dependent 7-cyano-7-deazaguanine reductase of Sinorhizobium fredii (strain NBRC 101917 / NGR234).